The following is a 170-amino-acid chain: Lipoprotein signal peptidase (170 aa).

The next 3 helical transmembrane spans lie at 9–29 (FNIF…KYLV), 72–92 (IFFI…ALKE), and 95–117 (CITR…DRLF). Residues Asp124 and Asp146 contribute to the active site. Residues 143–163 (NFADSYVVIGMILFLVYDFFI) form a helical membrane-spanning segment.

The protein belongs to the peptidase A8 family.

It localises to the cell inner membrane. The catalysed reaction is Release of signal peptides from bacterial membrane prolipoproteins. Hydrolyzes -Xaa-Yaa-Zaa-|-(S,diacylglyceryl)Cys-, in which Xaa is hydrophobic (preferably Leu), and Yaa (Ala or Ser) and Zaa (Gly or Ala) have small, neutral side chains.. It participates in protein modification; lipoprotein biosynthesis (signal peptide cleavage). This protein specifically catalyzes the removal of signal peptides from prolipoproteins. The chain is Lipoprotein signal peptidase from Borrelia garinii subsp. bavariensis (strain ATCC BAA-2496 / DSM 23469 / PBi) (Borreliella bavariensis).